We begin with the raw amino-acid sequence, 768 residues long: DNA replication licensing factor MCM3 homolog 1 (768 aa).

Positions 290 to 497 (TFDLLGNSLA…IDRQISEHVA (208 aa)) constitute an MCM domain. ATP is bound at residue 340–347 (GDPSVAKS). Positions 472 to 475 (SRFD) match the Arginine finger motif. The disordered stretch occupies residues 662–687 (MKQQAEHDAGATGGTVDGHGSSGNDP). Positions 672–682 (ATGGTVDGHGS) are enriched in gly residues.

It belongs to the MCM family.

It is found in the nucleus. It carries out the reaction ATP + H2O = ADP + phosphate + H(+). Its function is as follows. Acts as a factor that allows the DNA to undergo a single round of replication per cell cycle. Required for DNA replication and cell proliferation. May act as a component of the MCM complex which is the putative replicative helicase of the replication licensing system in eukaryotic cells. The polypeptide is DNA replication licensing factor MCM3 homolog 1 (ROA1) (Zea mays (Maize)).